The following is a 421-amino-acid chain: Putative bifunctional polynucleotide phosphatase/kinase (421 aa).

Positions 25 to 231 are phosphatase; that stretch reads DSYLKGIINN…SENLKTNYKL (207 aa). Residues 235–415 form a kinase region; it reads NPTEIIDEIE…DDPKWKRSFM (181 aa). 265-272 lines the ATP pocket; that stretch reads GQPGSGKS.

The protein in the N-terminal section; belongs to the DNA 3' phosphatase family.

It carries out the reaction a 3'end (2'-deoxyribonucleotide 3'-phosphate)-DNA + H2O = a 3'-end 2'-deoxyribonucleotide-DNA + phosphate. The enzyme catalyses a 5'-end dephospho-2'-deoxyribonucleoside-DNA + ATP = a 5'-end 5'-phospho-2'-deoxyribonucleoside-DNA + ADP + H(+). This Acanthamoeba polyphaga mimivirus (APMV) protein is Putative bifunctional polynucleotide phosphatase/kinase.